Here is an 830-residue protein sequence, read N- to C-terminus: Lon protease 3 (830 aa).

Residues 19-213 enclose the Lon N-terminal domain; that stretch reads VPLLPLRDII…RLIELMQAEI (195 aa). 367-374 is an ATP binding site; the sequence is GPPGVGKT. The 181-residue stretch at 604-784 folds into the Lon proteolytic domain; the sequence is RDEVGLVNGL…DDVLREALIL (181 aa). Catalysis depends on residues serine 690 and lysine 733. Low complexity predominate over residues 811–823; that stretch reads PVKAPPAAAGEPT. The segment at 811-830 is disordered; sequence PVKAPPAAAGEPTPAAPPGA.

It belongs to the peptidase S16 family. As to quaternary structure, homohexamer. Organized in a ring with a central cavity.

The protein resides in the cytoplasm. The catalysed reaction is Hydrolysis of proteins in presence of ATP.. ATP-dependent serine protease that mediates the selective degradation of mutant and abnormal proteins as well as certain short-lived regulatory proteins. Required for cellular homeostasis and for survival from DNA damage and developmental changes induced by stress. Degrades polypeptides processively to yield small peptide fragments that are 5 to 10 amino acids long. Binds to DNA in a double-stranded, site-specific manner. This Sorangium cellulosum (strain So ce56) (Polyangium cellulosum (strain So ce56)) protein is Lon protease 3.